The primary structure comprises 285 residues: RNA polymerase sigma factor RpoH (285 aa).

The interval 53–122 is sigma-70 factor domain-2; the sequence is LILSHLRFVI…IHEYVLRNWR (70 aa). Positions 77 to 80 match the Interaction with polymerase core subunit RpoC motif; that stretch reads DLIQ. Residues 229–281 are sigma-70 factor domain-4; sequence ALLRLDERSRNIIRARWLDKKEKNTLQKIANNYGISAERVRQLEKNAMKKLKI. The segment at residues 254 to 273 is a DNA-binding region (H-T-H motif); the sequence is LQKIANNYGISAERVRQLEK.

The protein belongs to the sigma-70 factor family. RpoH subfamily. In terms of assembly, interacts with the RNA polymerase core enzyme.

It localises to the cytoplasm. Sigma factors are initiation factors that promote the attachment of RNA polymerase to specific initiation sites and are then released. This sigma factor is involved in regulation of expression of heat shock genes. This is RNA polymerase sigma factor RpoH from Buchnera aphidicola subsp. Schizaphis graminum (strain Sg).